The sequence spans 143 residues: Nucleoside diphosphate kinase (143 aa).

6 residues coordinate ATP: Lys11, Phe59, Arg87, Thr93, Arg104, and Asn114. Catalysis depends on His117, which acts as the Pros-phosphohistidine intermediate.

This sequence belongs to the NDK family. Homotetramer. It depends on Mg(2+) as a cofactor.

It is found in the cytoplasm. The catalysed reaction is a 2'-deoxyribonucleoside 5'-diphosphate + ATP = a 2'-deoxyribonucleoside 5'-triphosphate + ADP. The enzyme catalyses a ribonucleoside 5'-diphosphate + ATP = a ribonucleoside 5'-triphosphate + ADP. In terms of biological role, major role in the synthesis of nucleoside triphosphates other than ATP. The ATP gamma phosphate is transferred to the NDP beta phosphate via a ping-pong mechanism, using a phosphorylated active-site intermediate. This is Nucleoside diphosphate kinase from Erwinia tasmaniensis (strain DSM 17950 / CFBP 7177 / CIP 109463 / NCPPB 4357 / Et1/99).